The primary structure comprises 388 residues: Flap endonuclease 1 (388 aa).

Residues 1–104 (MGILGLSKLI…GELAKRAERR (104 aa)) are N-domain. A Mg(2+)-binding site is contributed by Asp34. DNA-binding residues include Arg47 and Arg70. Residues Asp86, Glu158, Glu160, Asp179, and Asp181 each contribute to the Mg(2+) site. Positions 122–253 (EIEKFNRRLV…KRAIELINSY (132 aa)) are I-domain. Glu158 contacts DNA. Residues Gly231 and Asp233 each coordinate DNA. A Mg(2+)-binding site is contributed by Asp233. Residues 336 to 344 (TQVRLDSFF) form an interaction with PCNA region. A disordered region spans residues 355 to 388 (AAAKRKAEEAKKSANNKKAKIGGGGGAGRGRRPK).

The protein belongs to the XPG/RAD2 endonuclease family. FEN1 subfamily. As to quaternary structure, interacts with PCNA. Three molecules of FEN1 bind to one PCNA trimer with each molecule binding to one PCNA monomer. PCNA stimulates the nuclease activity without altering cleavage specificity. Requires Mg(2+) as cofactor. Post-translationally, phosphorylated. Phosphorylation upon DNA damage induces relocalization to the nuclear plasma.

The protein localises to the nucleus. The protein resides in the nucleolus. It is found in the nucleoplasm. Its subcellular location is the mitochondrion. Functionally, structure-specific nuclease with 5'-flap endonuclease and 5'-3' exonuclease activities involved in DNA replication and repair. During DNA replication, cleaves the 5'-overhanging flap structure that is generated by displacement synthesis when DNA polymerase encounters the 5'-end of a downstream Okazaki fragment. It enters the flap from the 5'-end and then tracks to cleave the flap base, leaving a nick for ligation. Also involved in the long patch base excision repair (LP-BER) pathway, by cleaving within the apurinic/apyrimidinic (AP) site-terminated flap. Acts as a genome stabilization factor that prevents flaps from equilibrating into structures that lead to duplications and deletions. Also possesses 5'-3' exonuclease activity on nicked or gapped double-stranded DNA, and exhibits RNase H activity. Also involved in replication and repair of rDNA and in repairing mitochondrial DNA. The chain is Flap endonuclease 1 from Drosophila willistoni (Fruit fly).